Reading from the N-terminus, the 1905-residue chain is Tudor domain-containing 6-like (1905 aa).

3 Tudor domains span residues 1-30 (MVEVYFIDHGNTEMVDWYNVKKLPAELREM), 215-279 (YERG…LFDL), and 435-491 (SVTP…AYEL). The interval 564–795 (SRAEGSFGNS…SKLTPPLSKL (232 aa)) is disordered. Positions 573-591 (SEKRNQLNDLDRGGRKETT) are enriched in basic and acidic residues. The segment covering 592 to 602 (SKFQPYSQGSK) has biased composition (polar residues). The span at 622–631 (FQTKEREQFE) shows a compositional bias: basic and acidic residues. 2 stretches are compositionally biased toward polar residues: residues 651 to 660 (VQKNMSQSGF) and 687 to 704 (LYSQGRETPSMSQNSSYS). The segment covering 715-726 (RSKERQVSEHKQ) has biased composition (basic and acidic residues). Polar residues-rich tracts occupy residues 746–766 (KASQNGSSSQTEAFWSSGSDQ) and 774–787 (NASQQRRSTFQESK). Tudor domains follow at residues 853–910 (YVNL…LLSI) and 1060–1118 (EIEV…IAAI). 4 disordered regions span residues 1213 to 1245 (IEDNVIPSQADEDDHSEPSEEPCASESIETPAV), 1449 to 1599 (EDFE…TETE), 1655 to 1682 (VEDLDTENQESQICISGSDNRSKESGPV), and 1827 to 1905 (ESPA…APSV). 2 stretches are compositionally biased toward acidic residues: residues 1491 to 1500 (EAEGLEDQDQ) and 1522 to 1535 (EQAEDLVPEEDPGT). The segment covering 1553–1588 (SQEHKDFPEQEEDRVAEHKNDISEPDLQSKEQKEDL) has biased composition (basic and acidic residues). A compositionally biased stretch (polar residues) spans 1663-1673 (QESQICISGSD). A compositionally biased stretch (acidic residues) spans 1876–1887 (FEPETDDMEQME).

Interacts with FRGY2 (a component of messenger ribonucleoprotein (mRNP) particle) during germ cell development. Expressed in testis.

It is found in the cytoplasm. Its function is as follows. Tudor domain-containing protein involved in germ cell development, more specifically the formation of chromatoid body (during spermiogenesis), Balbiani body (during oogenesis), germ plasm (upon fertilization), and for proper miRNA expression and spliceosome maturation. Component of cytoplasmic mRNP particle through interaction with FRGY2, and binds to maternal mRNA related to cell cycle (RCC1, RHAMM, INCENP-A, MAD2L1, HELLS) and a germ plasm specific mRNA (Dead end/Dnd1), it is proposed a role in translational activation of the maternal mRNAs repressed in mRNP particle. This chain is Tudor domain-containing 6-like, found in Xenopus laevis (African clawed frog).